Here is a 558-residue protein sequence, read N- to C-terminus: Dihydroxy-acid dehydratase (558 aa).

Cysteine 50 contributes to the [2Fe-2S] cluster binding site. Aspartate 82 contacts Mg(2+). Cysteine 123 contributes to the [2Fe-2S] cluster binding site. Mg(2+) is bound by residues aspartate 124 and lysine 125. Lysine 125 carries the post-translational modification N6-carboxylysine. A [2Fe-2S] cluster-binding site is contributed by cysteine 195. Glutamate 447 serves as a coordination point for Mg(2+). Serine 472 serves as the catalytic Proton acceptor.

Belongs to the IlvD/Edd family. Homodimer. [2Fe-2S] cluster is required as a cofactor. It depends on Mg(2+) as a cofactor.

It carries out the reaction (2R)-2,3-dihydroxy-3-methylbutanoate = 3-methyl-2-oxobutanoate + H2O. It catalyses the reaction (2R,3R)-2,3-dihydroxy-3-methylpentanoate = (S)-3-methyl-2-oxopentanoate + H2O. The protein operates within amino-acid biosynthesis; L-isoleucine biosynthesis; L-isoleucine from 2-oxobutanoate: step 3/4. It functions in the pathway amino-acid biosynthesis; L-valine biosynthesis; L-valine from pyruvate: step 3/4. In terms of biological role, functions in the biosynthesis of branched-chain amino acids. Catalyzes the dehydration of (2R,3R)-2,3-dihydroxy-3-methylpentanoate (2,3-dihydroxy-3-methylvalerate) into 2-oxo-3-methylpentanoate (2-oxo-3-methylvalerate) and of (2R)-2,3-dihydroxy-3-methylbutanoate (2,3-dihydroxyisovalerate) into 2-oxo-3-methylbutanoate (2-oxoisovalerate), the penultimate precursor to L-isoleucine and L-valine, respectively. This is Dihydroxy-acid dehydratase from Saccharolobus islandicus (strain Y.N.15.51 / Yellowstone #2) (Sulfolobus islandicus).